A 259-amino-acid polypeptide reads, in one-letter code: uncharacterized protein (259 aa).

A signal peptide spans 1–22 (MKHSSKIIVFVSFLILTIFIGG). A lipid anchor (N-palmitoyl cysteine) is attached at C23. C23 carries S-diacylglycerol cysteine lipidation.

The protein belongs to the staphylococcal tandem lipoprotein family.

The protein localises to the cell membrane. This is an uncharacterized protein from Staphylococcus epidermidis (strain ATCC 35984 / DSM 28319 / BCRC 17069 / CCUG 31568 / BM 3577 / RP62A).